The sequence spans 119 residues: DNA-binding protein MMP0157 (119 aa).

Positions 1-12 (MNPEEIRQRRLQ) are enriched in basic and acidic residues. The interval 1 to 35 (MNPEEIRQRRLQEMQAKAQAQGAANDPEAQRQMQE) is disordered.

Belongs to the PDCD5 family.

This Methanococcus maripaludis (strain DSM 14266 / JCM 13030 / NBRC 101832 / S2 / LL) protein is DNA-binding protein MMP0157.